The chain runs to 104 residues: Secreted RxLR effector protein 54 (104 aa).

Positions 1–19 (MIFTLLGLALVATKSACIA) are cleaved as a signal peptide. The short motif at 52 to 55 (RSLR) is the RxLR element. Residue Asn64 is glycosylated (N-linked (GlcNAc...) asparagine).

The protein belongs to the RxLR effector family.

It localises to the secreted. The protein resides in the host chloroplast envelope. Its subcellular location is the host mitochondrion. The protein localises to the host nucleus. It is found in the host cytoplasm. Functionally, secreted effector that completely suppresses the host cell death induced by cell death-inducing proteins. This Plasmopara viticola (Downy mildew of grapevine) protein is Secreted RxLR effector protein 54.